The primary structure comprises 434 residues: MAKTDLARRVYNHTWKLDPIIRSLLDTDFYKLLMLQMIWGLYPRVDATFSLINRTSSVRLADEIDEGELRAQLDHARTLRFSKKEMIWLAGNTFYGRKQIFQPEFLAWLHDFQLPEYELRRKDGQYELHFHGPWTHTTMWEIPALAIINELRSRAAMKNLGPFSLDVLYARAKAKMWSKVERLRQLPDLKISDFGTRRRHSFLWQRWCVEALKEGIGSAFTGTSNVLLAMDTDLEALGTNAHELPMVLAALAKTDDELRSAPYRVLQDWNRYYGGNLLIVLPDAFGTAAFLRNAPDWVADWTGFRPDSAPPIEGGERIIEWWKSKGKDPREKLLIFSDALDVDTIEETYRHFEGRVRMGFGWGTNLTNDFAGCAPQSIDGLKAISLVCKVTDANGHPAVKLSDNPQKATGDPKEVARYLRFFGNEERVEQLVRV.

Histidine 242 bears the Phosphohistidine; by autocatalysis mark.

The protein belongs to the NAPRTase family. Transiently phosphorylated on a His residue during the reaction cycle. Phosphorylation strongly increases the affinity for substrates and increases the rate of nicotinate D-ribonucleotide production. Dephosphorylation regenerates the low-affinity form of the enzyme, leading to product release.

It catalyses the reaction nicotinate + 5-phospho-alpha-D-ribose 1-diphosphate + ATP + H2O = nicotinate beta-D-ribonucleotide + ADP + phosphate + diphosphate. It participates in cofactor biosynthesis; NAD(+) biosynthesis; nicotinate D-ribonucleotide from nicotinate: step 1/1. Catalyzes the synthesis of beta-nicotinate D-ribonucleotide from nicotinate and 5-phospho-D-ribose 1-phosphate at the expense of ATP. This is Nicotinate phosphoribosyltransferase from Brucella abortus (strain S19).